We begin with the raw amino-acid sequence, 559 residues long: uncharacterized protein (559 aa).

Helical transmembrane passes span 103 to 123, 139 to 159, 192 to 212, 223 to 243, 263 to 283, 302 to 322, 348 to 368, 387 to 407, 413 to 434, 466 to 486, and 501 to 521; these read LAAL…NGLF, FGYY…LFYY, AGIT…SFPF, FFLI…IFLL, WSWV…TLAV, MLIL…SGVA, AAAF…NISD, IRRA…PWKI, AFLA…IFVA, ALIA…MSIN, and IGYF…NLVF.

The protein belongs to the purine-cytosine permease (2.A.39) family.

It is found in the golgi apparatus membrane. This is an uncharacterized protein from Schizosaccharomyces pombe (strain 972 / ATCC 24843) (Fission yeast).